The sequence spans 450 residues: Glucose-6-phosphate isomerase (450 aa).

The active-site Proton donor is the E290. Catalysis depends on residues H311 and K425.

This sequence belongs to the GPI family.

It localises to the cytoplasm. It catalyses the reaction alpha-D-glucose 6-phosphate = beta-D-fructose 6-phosphate. Its pathway is carbohydrate biosynthesis; gluconeogenesis. It participates in carbohydrate degradation; glycolysis; D-glyceraldehyde 3-phosphate and glycerone phosphate from D-glucose: step 2/4. Its function is as follows. Catalyzes the reversible isomerization of glucose-6-phosphate to fructose-6-phosphate. The polypeptide is Glucose-6-phosphate isomerase (Leuconostoc mesenteroides subsp. mesenteroides (strain ATCC 8293 / DSM 20343 / BCRC 11652 / CCM 1803 / JCM 6124 / NCDO 523 / NBRC 100496 / NCIMB 8023 / NCTC 12954 / NRRL B-1118 / 37Y)).